We begin with the raw amino-acid sequence, 772 residues long: Alpha-xylosidase (772 aa).

Asp416 functions as the Nucleophile in the catalytic mechanism. Glu419 is an active-site residue. Asp482 serves as the catalytic Proton donor.

It belongs to the glycosyl hydrolase 31 family. In terms of assembly, homohexamer.

It catalyses the reaction Hydrolysis of terminal, non-reducing alpha-D-xylose residues with release of alpha-D-xylose.. Can catalyze the transfer of alpha-xylosyl residue from alpha-xyloside to xylose, glucose, mannose, fructose, maltose, isomaltose, nigerose, kojibiose, sucrose and trehalose. This Escherichia coli (strain K12) protein is Alpha-xylosidase (yicI).